We begin with the raw amino-acid sequence, 266 residues long: Transcription regulator FGM4 (266 aa).

A disordered region spans residues 17-36 (KTQNRLAKRKSRIHAGKQQG). A compositionally biased stretch (basic residues) spans 18-31 (TQNRLAKRKSRIHA). ANK repeat units follow at residues 183–212 (KPGSPLHIASAMGHLKVVKTLITYGANVNE) and 216–245 (AGYSPIHYATRNNHTAIVALLLEKGADWSY).

Its subcellular location is the nucleus. Functionally, transcription regulator; part of the Fg3_54/C64 gene cluster that mediates the biosynthesis of the octapeptide fusaoctaxin A, a virulence factor that is required for cell-to-cell invasiveness of plant host. Positively regulates the expression the Fg3_54/C64 gene cluster. This Gibberella zeae (strain ATCC MYA-4620 / CBS 123657 / FGSC 9075 / NRRL 31084 / PH-1) (Wheat head blight fungus) protein is Transcription regulator FGM4.